We begin with the raw amino-acid sequence, 77 residues long: U8-lycotoxin-Ls1b (77 aa).

A signal peptide spans 1-20; the sequence is MKLIIFTGLVLFAIVSLIEA. The propeptide occupies 21 to 26; it reads QAENEK.

The protein belongs to the neurotoxin 19 (CSTX) family. 08 (U8-Lctx) subfamily. Post-translationally, contains 4 disulfide bonds. In terms of tissue distribution, expressed by the venom gland.

Its subcellular location is the secreted. The polypeptide is U8-lycotoxin-Ls1b (Lycosa singoriensis (Wolf spider)).